The sequence spans 662 residues: Methionine--tRNA ligase (662 aa).

The short motif at 14–24 (YYPSGKLHLGS) is the 'HIGH' region element. Positions 308–312 (KMSKS) match the 'KMSKS' region motif. Position 311 (Lys-311) interacts with ATP. In terms of domain architecture, tRNA-binding spans 559-662 (DFEKIELKVA…DDVPAGSLIG (104 aa)).

It belongs to the class-I aminoacyl-tRNA synthetase family. MetG type 2B subfamily. As to quaternary structure, homodimer.

The protein localises to the cytoplasm. The catalysed reaction is tRNA(Met) + L-methionine + ATP = L-methionyl-tRNA(Met) + AMP + diphosphate. Its function is as follows. Is required not only for elongation of protein synthesis but also for the initiation of all mRNA translation through initiator tRNA(fMet) aminoacylation. This chain is Methionine--tRNA ligase (metG), found in Lactococcus lactis subsp. lactis (strain IL1403) (Streptococcus lactis).